The chain runs to 122 residues: Large ribosomal subunit protein uL14 (122 aa).

The protein belongs to the universal ribosomal protein uL14 family. Part of the 50S ribosomal subunit. Forms a cluster with proteins L3 and L19. In the 70S ribosome, L14 and L19 interact and together make contacts with the 16S rRNA in bridges B5 and B8.

Its function is as follows. Binds to 23S rRNA. Forms part of two intersubunit bridges in the 70S ribosome. The sequence is that of Large ribosomal subunit protein uL14 from Bradyrhizobium sp. (strain BTAi1 / ATCC BAA-1182).